A 185-amino-acid chain; its full sequence is Putative RNA (cytidine(34)-2'-O)-methyltransferase (185 aa).

3 residues coordinate S-adenosyl-L-methionine: isoleucine 80, glycine 105, and isoleucine 126.

Belongs to the class IV-like SAM-binding methyltransferase superfamily. RNA methyltransferase TrmH family. TrmL subfamily.

The protein localises to the cytoplasm. The enzyme catalyses cytidine(34) in tRNA + S-adenosyl-L-methionine = 2'-O-methylcytidine(34) in tRNA + S-adenosyl-L-homocysteine + H(+). It carries out the reaction 5-carboxymethylaminomethyluridine(34) in tRNA(Leu) + S-adenosyl-L-methionine = 5-carboxymethylaminomethyl-2'-O-methyluridine(34) in tRNA(Leu) + S-adenosyl-L-homocysteine + H(+). Its function is as follows. Could methylate the ribose at the nucleotide 34 wobble position in tRNA. This chain is Putative RNA (cytidine(34)-2'-O)-methyltransferase, found in Lactobacillus gasseri (strain ATCC 33323 / DSM 20243 / BCRC 14619 / CIP 102991 / JCM 1131 / KCTC 3163 / NCIMB 11718 / NCTC 13722 / AM63).